Consider the following 214-residue polypeptide: Small ribosomal subunit protein uS5 (214 aa).

Residues 54 to 117 (LKYEVMDIKI…KNAKMNIIPV (64 aa)) form the S5 DRBM domain.

The protein belongs to the universal ribosomal protein uS5 family. Part of the 30S ribosomal subunit. Contacts protein S4.

Functionally, with S4 and S12 plays an important role in translational accuracy. This chain is Small ribosomal subunit protein uS5, found in Sulfurisphaera tokodaii (strain DSM 16993 / JCM 10545 / NBRC 100140 / 7) (Sulfolobus tokodaii).